The chain runs to 59 residues: Conotoxin Sr5.4 (59 aa).

The first 22 residues, 1–22, serve as a signal peptide directing secretion; the sequence is MRCLPVFVILLLLIASAPSVDA. The propeptide occupies 23–44; sequence QLKTKDDVPLASFHDNAKGTQH.

It belongs to the conotoxin T superfamily. Contains 2 disulfide bonds that can be either 'C1-C3, C2-C4' or 'C1-C4, C2-C3', since these disulfide connectivities have been observed for conotoxins with cysteine framework V (for examples, see AC P0DQQ7 and AC P81755). In terms of tissue distribution, expressed by the venom duct.

The protein resides in the secreted. In Conus spurius (Alphabet cone), this protein is Conotoxin Sr5.4.